A 118-amino-acid chain; its full sequence is Large ribosomal subunit protein bL20 (118 aa).

This sequence belongs to the bacterial ribosomal protein bL20 family.

In terms of biological role, binds directly to 23S ribosomal RNA and is necessary for the in vitro assembly process of the 50S ribosomal subunit. It is not involved in the protein synthesizing functions of that subunit. This is Large ribosomal subunit protein bL20 from Trichodesmium erythraeum (strain IMS101).